Here is a 201-residue protein sequence, read N- to C-terminus: Glycerol-3-phosphate acyltransferase (201 aa).

A run of 5 helical transmembrane segments spans residues 10 to 30 (MLIG…GLIL), 60 to 80 (LAAA…LIAA), 86 to 106 (AAIA…WIGF), 116 to 136 (LGVL…AWIV), and 166 to 186 (ALAA…RANI).

Belongs to the PlsY family. As to quaternary structure, probably interacts with PlsX.

It localises to the cell inner membrane. The catalysed reaction is an acyl phosphate + sn-glycerol 3-phosphate = a 1-acyl-sn-glycero-3-phosphate + phosphate. Its pathway is lipid metabolism; phospholipid metabolism. Functionally, catalyzes the transfer of an acyl group from acyl-phosphate (acyl-PO(4)) to glycerol-3-phosphate (G3P) to form lysophosphatidic acid (LPA). This enzyme utilizes acyl-phosphate as fatty acyl donor, but not acyl-CoA or acyl-ACP. The chain is Glycerol-3-phosphate acyltransferase from Brucella abortus (strain 2308).